A 479-amino-acid chain; its full sequence is Sulfate adenylyltransferase subunit 1 (479 aa).

In terms of domain architecture, tr-type G spans 22 to 238 (KDMLRFLTCG…DSMDISKEPK (217 aa)). The interval 31–38 (GSVDDGKS) is G1. 31–38 (GSVDDGKS) is a binding site for GTP. A G2 region spans residues 89–93 (GITID). The interval 110–113 (DTPG) is G3. Residues 110–114 (DTPGH) and 165–168 (NKMD) each bind GTP. The segment at 165–168 (NKMD) is G4. The segment at 202-204 (SAL) is G5.

This sequence belongs to the TRAFAC class translation factor GTPase superfamily. Classic translation factor GTPase family. CysN/NodQ subfamily. Heterodimer composed of CysD, the smaller subunit, and CysN.

It carries out the reaction sulfate + ATP + H(+) = adenosine 5'-phosphosulfate + diphosphate. It participates in sulfur metabolism; hydrogen sulfide biosynthesis; sulfite from sulfate: step 1/3. Functionally, with CysD forms the ATP sulfurylase (ATPS) that catalyzes the adenylation of sulfate producing adenosine 5'-phosphosulfate (APS) and diphosphate, the first enzymatic step in sulfur assimilation pathway. APS synthesis involves the formation of a high-energy phosphoric-sulfuric acid anhydride bond driven by GTP hydrolysis by CysN coupled to ATP hydrolysis by CysD. The chain is Sulfate adenylyltransferase subunit 1 from Sulfurovum sp. (strain NBC37-1).